The primary structure comprises 100 residues: Acylphosphatase (100 aa).

Positions 3-92 constitute an Acylphosphatase-like domain; it reads RRSYSVIGRV…PLPDTFDIRF (90 aa). Active-site residues include Arg-18 and Asn-36. The disordered stretch occupies residues 76-100; the sequence is DDPAHEGPLPDTFDIRFRAPGSASE.

This sequence belongs to the acylphosphatase family.

It catalyses the reaction an acyl phosphate + H2O = a carboxylate + phosphate + H(+). This chain is Acylphosphatase (acyP), found in Nitratidesulfovibrio vulgaris (strain ATCC 29579 / DSM 644 / CCUG 34227 / NCIMB 8303 / VKM B-1760 / Hildenborough) (Desulfovibrio vulgaris).